Consider the following 349-residue polypeptide: Delta(7)-sterol 5(6)-desaturase ERG3A (349 aa).

The next 3 helical transmembrane spans lie at I84–I104, I124–L144, and L162–W182. The 127-residue stretch at P170–T296 folds into the Fatty acid hydroxylase domain. The Histidine box-1 signature appears at H184–H188. The short motif at H197 to H201 is the Histidine box-2 element. The helical transmembrane segment at H227 to V247 threads the bilayer. Residues H272–H276 carry the Histidine box-3 motif.

Belongs to the sterol desaturase family.

It localises to the endoplasmic reticulum membrane. The catalysed reaction is episterol + 2 Fe(II)-[cytochrome b5] + O2 + 2 H(+) = 5-dehydroepisterol + 2 Fe(III)-[cytochrome b5] + 2 H2O. Its pathway is steroid metabolism; ergosterol biosynthesis. C-5 sterol desaturase; part of the third module of ergosterol biosynthesis pathway that includes the late steps of the pathway. ERG3A and ERG3BB catalyze the introduction of a C-5 double bond in the B ring to produce 5-dehydroepisterol. The third module or late pathway involves the ergosterol synthesis itself through consecutive reactions that mainly occur in the endoplasmic reticulum (ER) membrane. Firstly, the squalene synthase ERG9 catalyzes the condensation of 2 farnesyl pyrophosphate moieties to form squalene, which is the precursor of all steroids. Squalene synthase is crucial for balancing the incorporation of farnesyl diphosphate (FPP) into sterol and nonsterol isoprene synthesis. Secondly, squalene is converted into lanosterol by the consecutive action of the squalene epoxidase ERG1 and the lanosterol synthase ERG7. Then, the delta(24)-sterol C-methyltransferase ERG6 methylates lanosterol at C-24 to produce eburicol. Eburicol is the substrate of the sterol 14-alpha demethylase encoded by CYP51A, CYP51B and CYP51C, to yield 4,4,24-trimethyl ergosta-8,14,24(28)-trienol. CYP51B encodes the enzyme primarily responsible for sterol 14-alpha-demethylation, and plays an essential role in ascospore formation. CYP51A encodes an additional sterol 14-alpha-demethylase, induced on ergosterol depletion and responsible for the intrinsic variation in azole sensitivity. The third CYP51 isoform, CYP51C, does not encode a sterol 14-alpha-demethylase, but is required for full virulence on host wheat ears. The C-14 reductase ERG24 then reduces the C14=C15 double bond which leads to 4,4-dimethylfecosterol. A sequence of further demethylations at C-4, involving the C-4 demethylation complex containing the C-4 methylsterol oxidases ERG25, the sterol-4-alpha-carboxylate 3-dehydrogenase ERG26 and the 3-keto-steroid reductase ERG27, leads to the production of fecosterol via 4-methylfecosterol. ERG28 has a role as a scaffold to help anchor ERG25, ERG26 and ERG27 to the endoplasmic reticulum. The C-8 sterol isomerase ERG2 then catalyzes the reaction which results in unsaturation at C-7 in the B ring of sterols and thus converts fecosterol to episterol. The sterol-C5-desaturases ERG3A and ERG3BB then catalyze the introduction of a C-5 double bond in the B ring to produce 5-dehydroepisterol. The C-22 sterol desaturases ERG5A and ERG5B further convert 5-dehydroepisterol into ergosta-5,7,22,24(28)-tetraen-3beta-ol by forming the C-22(23) double bond in the sterol side chain. Finally, ergosta-5,7,22,24(28)-tetraen-3beta-ol is substrate of the C-24(28) sterol reductase ERG4 to produce ergosterol. The polypeptide is Delta(7)-sterol 5(6)-desaturase ERG3A (Gibberella zeae (strain ATCC MYA-4620 / CBS 123657 / FGSC 9075 / NRRL 31084 / PH-1) (Wheat head blight fungus)).